We begin with the raw amino-acid sequence, 105 residues long: Nitrogen fixation nifHD region GlnB-like protein 1 (105 aa).

It belongs to the P(II) protein family.

In terms of biological role, could be involved in the regulation of nitrogen fixation. In Methanothermococcus thermolithotrophicus (Methanococcus thermolithotrophicus), this protein is Nitrogen fixation nifHD region GlnB-like protein 1 (glnBA).